We begin with the raw amino-acid sequence, 713 residues long: Catalase-peroxidase (713 aa).

Residues 77 to 200 (WHSAGTYRTT…LGATVMGLIY (124 aa)) constitute a cross-link (tryptophyl-tyrosyl-methioninium (Trp-Tyr) (with M-226)). Residue His-78 is the Proton acceptor of the active site. The tryptophyl-tyrosyl-methioninium (Tyr-Met) (with W-77) cross-link spans 200–226 (YVNPEGPDGEPDLEGSAANIRESFGRM). Residue His-241 participates in heme b binding.

The protein belongs to the peroxidase family. Peroxidase/catalase subfamily. In terms of assembly, homodimer or homotetramer. It depends on heme b as a cofactor. In terms of processing, formation of the three residue Trp-Tyr-Met cross-link is important for the catalase, but not the peroxidase activity of the enzyme.

The enzyme catalyses H2O2 + AH2 = A + 2 H2O. It catalyses the reaction 2 H2O2 = O2 + 2 H2O. Its function is as follows. Bifunctional enzyme with both catalase and broad-spectrum peroxidase activity. This chain is Catalase-peroxidase, found in Natronomonas pharaonis (strain ATCC 35678 / DSM 2160 / CIP 103997 / JCM 8858 / NBRC 14720 / NCIMB 2260 / Gabara) (Halobacterium pharaonis).